A 476-amino-acid chain; its full sequence is ATP synthase subunit beta 2 (476 aa).

160–167 provides a ligand contact to ATP; the sequence is GGAGVGKT.

This sequence belongs to the ATPase alpha/beta chains family. As to quaternary structure, F-type ATPases have 2 components, CF(1) - the catalytic core - and CF(0) - the membrane proton channel. CF(1) has five subunits: alpha(3), beta(3), gamma(1), delta(1), epsilon(1). CF(0) has four main subunits: a(1), b(1), b'(1) and c(9-12).

It is found in the cell inner membrane. It catalyses the reaction ATP + H2O + 4 H(+)(in) = ADP + phosphate + 5 H(+)(out). Produces ATP from ADP in the presence of a proton gradient across the membrane. The catalytic sites are hosted primarily by the beta subunits. The chain is ATP synthase subunit beta 2 from Bradyrhizobium sp. (strain BTAi1 / ATCC BAA-1182).